The following is an 800-amino-acid chain: Phenylalanine--tRNA ligase beta subunit (800 aa).

The region spanning 39–154 (TKDIKNLVVG…ESQVPGTDAL (116 aa)) is the tRNA-binding domain. One can recognise a B5 domain in the interval 408–483 (AFITPIDITA…RIYGYDDIPS (76 aa)). 4 residues coordinate Mg(2+): aspartate 461, aspartate 467, glutamate 470, and glutamate 471. Residues 708 to 800 (PRFPGMSRDI…ALIEQGAVIR (93 aa)) form the FDX-ACB domain.

The protein belongs to the phenylalanyl-tRNA synthetase beta subunit family. Type 1 subfamily. In terms of assembly, tetramer of two alpha and two beta subunits. It depends on Mg(2+) as a cofactor.

Its subcellular location is the cytoplasm. It carries out the reaction tRNA(Phe) + L-phenylalanine + ATP = L-phenylalanyl-tRNA(Phe) + AMP + diphosphate + H(+). The sequence is that of Phenylalanine--tRNA ligase beta subunit from Staphylococcus aureus (strain Mu50 / ATCC 700699).